We begin with the raw amino-acid sequence, 146 residues long: Anti-sigma F factor (146 aa).

Belongs to the anti-sigma-factor family.

It carries out the reaction L-seryl-[protein] + ATP = O-phospho-L-seryl-[protein] + ADP + H(+). The catalysed reaction is L-threonyl-[protein] + ATP = O-phospho-L-threonyl-[protein] + ADP + H(+). Functionally, binds to sigma F and blocks its ability to form an RNA polymerase holoenzyme (E-sigma F). Phosphorylates SpoIIAA on a serine residue. This phosphorylation may enable SpoIIAA to act as an anti-anti-sigma factor that counteracts SpoIIAB and thus releases sigma F from inhibition. The sequence is that of Anti-sigma F factor from Geobacillus thermodenitrificans (strain NG80-2).